Reading from the N-terminus, the 372-residue chain is Isoliquiritigenin 2'-O-methyltransferase (372 aa).

Residues Gly217, Asp240, Asp260, Met261, and Lys274 each contribute to the S-adenosyl-L-methionine site. His278 acts as the Proton acceptor in catalysis.

This sequence belongs to the class I-like SAM-binding methyltransferase superfamily. Cation-independent O-methyltransferase family. COMT subfamily. In terms of assembly, monomer. Homodimer. In terms of tissue distribution, roots (at protein level). Expressed mainly in roots, and to a lesser extent in root nodules. In the roots, expression is not detected in the root tip or the cells immediately behind the tip, but is detected in tissues starting 1.5-2.0 mm distal to the root tip. Detected in the epidermal and cortical cells of 2 day old roots, with lower levels in vascular tissue.

The catalysed reaction is isoliquiritigenin + S-adenosyl-L-methionine = 2'-O-methylisoliquiritigenin + S-adenosyl-L-homocysteine + H(+). The enzyme catalyses licodione + S-adenosyl-L-methionine = 2'-O-methyllicodione + S-adenosyl-L-homocysteine + H(+). With respect to regulation, inhibited by 1 mM Co(2+), Cu(2+), Zn(2+) or Fe(2+). Non-competitively inhibited by S-adenosyl-L-homocysteine. Competitively inhibited by 2'-O-methylisoliquiritigenin. In terms of biological role, methylates the 2'-hydroxyl of isoliquiritigenin and licodione. Does not methylate narigenin chalcone, caffeic acid or daidzein. Involved in the root nodulation initiation by promoting the biosynthesis of nod-inducing molecules. This Medicago sativa (Alfalfa) protein is Isoliquiritigenin 2'-O-methyltransferase.